A 273-amino-acid polypeptide reads, in one-letter code: MQWNVPRTMSRLALRTFLEAQKARLFDHHRSTKGLLLVHRGEYRVAWTPHLRKQWLHLSAVQCLAKQRNLLDAQPPQRGALPQGRWEQDILSKRVLSSSSTSQETPSEKKEEPDPLQDKSISLYQRFKKTFRQYGKVLIPVHLITSGIWFGTFYYASIKGVNVIPFLEFLGLPDSVVDILKNSQSGNALTAYAMFKIATPARYTVTLGGTSFTVKYLRSHGYMSTPPPVKEYLQGRMEETKELISEKMEETKDRLTEKLQETKEKVSFKKKVE.

The disordered stretch occupies residues 95 to 116 (VLSSSSTSQETPSEKKEEPDPL). Residues 106 to 116 (PSEKKEEPDPL) show a composition bias toward basic and acidic residues. A DUF1279 domain is found at 118–230 (DKSISLYQRF…GYMSTPPPVK (113 aa)). A helical membrane pass occupies residues 138 to 158 (LIPVHLITSGIWFGTFYYASI). A coiled-coil region spans residues 233–272 (LQGRMEETKELISEKMEETKDRLTEKLQETKEKVSFKKKV). The interval 247–273 (KMEETKDRLTEKLQETKEKVSFKKKVE) is disordered.

Belongs to the FAM210 family. Interacts with ATAD3A.

The protein localises to the membrane. It is found in the mitochondrion. It localises to the cytoplasm. May play a role in the structure and strength of both muscle and bone. The chain is Protein FAM210A (Fam210a) from Rattus norvegicus (Rat).